Reading from the N-terminus, the 177-residue chain is Ribosome maturation factor RimM (177 aa).

A PRC barrel domain is found at 100–177; it reads EDEYYWSDLV…TVLVAWPSDY (78 aa).

The protein belongs to the RimM family. In terms of assembly, binds ribosomal protein uS19.

It is found in the cytoplasm. Its function is as follows. An accessory protein needed during the final step in the assembly of 30S ribosomal subunit, possibly for assembly of the head region. Essential for efficient processing of 16S rRNA. May be needed both before and after RbfA during the maturation of 16S rRNA. It has affinity for free ribosomal 30S subunits but not for 70S ribosomes. The protein is Ribosome maturation factor RimM of Psychrobacter arcticus (strain DSM 17307 / VKM B-2377 / 273-4).